We begin with the raw amino-acid sequence, 219 residues long: 7-cyano-7-deazaguanine synthase (219 aa).

ATP is bound at residue 10 to 20 (FSGGQDSTTCL). Zn(2+) contacts are provided by cysteine 188, cysteine 197, cysteine 200, and cysteine 203.

Belongs to the QueC family. Homodimer. Requires Zn(2+) as cofactor.

The catalysed reaction is 7-carboxy-7-deazaguanine + NH4(+) + ATP = 7-cyano-7-deazaguanine + ADP + phosphate + H2O + H(+). The protein operates within purine metabolism; 7-cyano-7-deazaguanine biosynthesis. In terms of biological role, catalyzes the ATP-dependent conversion of 7-carboxy-7-deazaguanine (CDG) to 7-cyano-7-deazaguanine (preQ(0)). This Clostridium botulinum (strain Loch Maree / Type A3) protein is 7-cyano-7-deazaguanine synthase.